Here is a 155-residue protein sequence, read N- to C-terminus: Small ribosomal subunit protein uS7cz/uS7cy (155 aa).

Belongs to the universal ribosomal protein uS7 family. As to quaternary structure, part of the 30S ribosomal subunit.

It is found in the plastid. Its subcellular location is the chloroplast. Its function is as follows. One of the primary rRNA binding proteins, it binds directly to 16S rRNA where it nucleates assembly of the head domain of the 30S subunit. This is Small ribosomal subunit protein uS7cz/uS7cy (rps7-A) from Amborella trichopoda.